We begin with the raw amino-acid sequence, 499 residues long: MLFRSCVGMVSRYSRALLPTITISSRIATIVLPFALTRGRKIHTMSKDEEWWKKIRKSPPVDELMLESVVEVFTDSTKYSKVKPWQTLNQESYGGSGFAIAGKKILTNAHVVEGMNDHIFVHVKRHGSQVKYKAKVQKIAHECDLAILEIDSDEFWKGMNPLEFGDIPPLNEIVYVVGYPKAGETICVTKGVVTGVKTGNYLRSSTKLLTIHIDATTYGGNSGGPVITGDKVLGVLFQILGDKKSTGVVIPTPIIRHFITGAEESSHNAVFGSLVLSCQSMKNAQIRNHFKMSPETTGILINKINSSSGAHKILRKDDIILAIDGVPVLSEMRRISFNHFISMKKPDENILVKVLRKGKEHEYNISLKPVKPHIQVQQYYNLPSYYIFGGFVFVPLTKSYIDDKYYKITDEQHVIISQVMPDDINKGYSNFKDLQVEKVNGVKVKNLKHLRELIEGCFSKDLRLDLENDKVMVLNYESAKKATFEILERHNIKSAWASE.

The N-terminal 24 residues, 1 to 24 (MLFRSCVGMVSRYSRALLPTITIS), are a transit peptide targeting the mitochondrion. Positions 94–259 (GGSGFAIAGK…IPTPIIRHFI (166 aa)) are serine protease. Residues His110, Asp144, and Ser222 each act as charge relay system in the active site. The PDZ domain occupies 272–356 (GSLVLSCQSM…DENILVKVLR (85 aa)).

It belongs to the peptidase S1C family.

The protein localises to the mitochondrion matrix. Functionally, putative serine protease. This chain is Putative protease Do-like 12, mitochondrial (DEGP12), found in Arabidopsis thaliana (Mouse-ear cress).